A 227-amino-acid chain; its full sequence is Transmembrane emp24 domain-containing protein 4 (227 aa).

Residues 1 to 29 (MAGVGAGPLRAMGRQALLLLALCATGAQG) form the signal peptide. The Lumenal segment spans residues 30–194 (LYFHIGETEK…RLTSESTNQR (165 aa)). A GOLD domain is found at 39-137 (KRCFIEEIPD…KLRVHLDIQV (99 aa)). N-linked (GlcNAc...) asparagine glycosylation is present at Asn117. A coiled-coil region spans residues 147-176 (IAAKDKLTELQLRARQLLDQVEQIQKEQDY). The helical transmembrane segment at 195–212 (VLWWSIAQTVILILTGIW) threads the bilayer. Residues 213–227 (QMRHLKSFFEAKKLV) lie on the Cytoplasmic side of the membrane. Positions 220–221 (FF) match the COPII vesicle coat-binding motif. The COPI vesicle coat-binding motif lies at 220–227 (FFEAKKLV).

This sequence belongs to the EMP24/GP25L family.

It localises to the endoplasmic reticulum membrane. Functionally, involved in vesicular protein trafficking, mainly in the early secretory pathway. targeting. Involved in the maintenance of the Golgi apparatus. Appears to play a role in the biosynthesis of secreted cargo including processing. Involved in endoplasmic reticulum stress response. May play a role in the regulation of heat-shock response and apoptosis. This is Transmembrane emp24 domain-containing protein 4 (TMED4) from Homo sapiens (Human).